Consider the following 194-residue polypeptide: Probable nicotinate-nucleotide adenylyltransferase (194 aa).

Belongs to the NadD family.

The enzyme catalyses nicotinate beta-D-ribonucleotide + ATP + H(+) = deamido-NAD(+) + diphosphate. The protein operates within cofactor biosynthesis; NAD(+) biosynthesis; deamido-NAD(+) from nicotinate D-ribonucleotide: step 1/1. Catalyzes the reversible adenylation of nicotinate mononucleotide (NaMN) to nicotinic acid adenine dinucleotide (NaAD). This is Probable nicotinate-nucleotide adenylyltransferase from Brucella abortus (strain 2308).